The chain runs to 375 residues: MVNGRLRDTSLIVDLDALRHNIQEQKKVLPENSKILAVVKANAYGNGLIPVAQTAMTSGASGLCVAILDEALELRDNGIEAMTLVLGITSVEDALIAAQAGVSLTVGSLDWLEQYHQLAQVAKPKKPLKVHLGIDSGMGRIGFTEVAAFKQAVKLLDSPEFEFEGMFTHFATADSPDENYFNQQVQRWHQFVASLAELPPYVHMANSATGLWHRETITANTIRMGISMYGQNPSGRDLKLTLDLQPVSSLVSSISFVKQLKAGRSVSYGATYTAEQDEWLATLPIGYADGYPRCMTGYKVLVDGQFCDIAGRVCMDQMMIRLPKYYPVGTPVVLMGKSGDQEITATDLAERAGTINYEILTNISNRVHRIYRQSK.

K40 functions as the Proton acceptor; specific for D-alanine in the catalytic mechanism. K40 is modified (N6-(pyridoxal phosphate)lysine). Residue R140 coordinates substrate. Y268 functions as the Proton acceptor; specific for L-alanine in the catalytic mechanism. Residue M315 participates in substrate binding.

The protein belongs to the alanine racemase family. Requires pyridoxal 5'-phosphate as cofactor.

The enzyme catalyses L-alanine = D-alanine. Its pathway is amino-acid biosynthesis; D-alanine biosynthesis; D-alanine from L-alanine: step 1/1. In terms of biological role, catalyzes the interconversion of L-alanine and D-alanine. May also act on other amino acids. In Limosilactobacillus reuteri (strain DSM 20016) (Lactobacillus reuteri), this protein is Alanine racemase (alr).